Consider the following 75-residue polypeptide: Small ribosomal subunit protein bS18 (75 aa).

The protein belongs to the bacterial ribosomal protein bS18 family. In terms of assembly, part of the 30S ribosomal subunit. Forms a tight heterodimer with protein bS6.

Binds as a heterodimer with protein bS6 to the central domain of the 16S rRNA, where it helps stabilize the platform of the 30S subunit. The polypeptide is Small ribosomal subunit protein bS18 (Clostridioides difficile (strain 630) (Peptoclostridium difficile)).